Here is a 374-residue protein sequence, read N- to C-terminus: Putative G-protein coupled receptor-like protein B0244.6 (374 aa).

At 1–54 (MTQNHYTTSIFANCSKHYEFEILLETCTNSTNPCHAVSQIQSAITIAYVDYYTS) the chain is on the extracellular side. A helical membrane pass occupies residues 55–75 (VALFSIAALLDIYCLIITIPL). Over 76-86 (YRRMKDDSKKK) the chain is Cytoplasmic. A helical membrane pass occupies residues 87–107 (YVFLITRCISGLLLVVAWLLI). Over 108–137 (QCIYLRFIAPSQDNLPYYVLALALNIGSTY) the chain is Extracellular. A helical membrane pass occupies residues 138-158 (VLLGSYVGMAGILYLGVLNPI). Over 159–169 (AFNQHLTLRIV) the chain is Cytoplasmic. A helical transmembrane segment spans residues 170–190 (YIAVCIIFVISIFISIPLAIF). Residues 191–216 (QALMTVPTSSMSCTDTACAPLITLIN) lie on the Extracellular side of the membrane. The chain crosses the membrane as a helical span at residues 217 to 237 (FVLVFGSLITTTLTLTFVLIS). Topologically, residues 238–262 (LCRHRKEFKKLDTTSNTSLNSAVRL) are cytoplasmic. Residues 263–283 (LKFTLFAVLLLVAAEVIPFVI) form a helical membrane-spanning segment. Topologically, residues 284–304 (SETKKKHSVVTGCYYFYHSGK) are extracellular. A helical transmembrane segment spans residues 305-325 (VIQYAVFALTESSIWSIALII). Residues 326 to 374 (DPLINIIFDRTVSKKATDQVKWMRKSCVGLVRKVTKRSNPENFTETSEI) are Cytoplasmic-facing.

This sequence belongs to the G-protein coupled receptor 1 family. B0244 subfamily.

It is found in the cell membrane. This Caenorhabditis elegans protein is Putative G-protein coupled receptor-like protein B0244.6.